Here is a 154-residue protein sequence, read N- to C-terminus: Aspartate carbamoyltransferase regulatory chain (154 aa).

Residues Cys109, Cys114, Cys138, and Cys141 each coordinate Zn(2+).

Belongs to the PyrI family. In terms of assembly, contains catalytic and regulatory chains. Zn(2+) serves as cofactor.

Functionally, involved in allosteric regulation of aspartate carbamoyltransferase. This is Aspartate carbamoyltransferase regulatory chain from Yersinia pestis.